The primary structure comprises 875 residues: Metal transporter CNNM2 (875 aa).

Residues 1-250 (MIGCGACEPE…TKMIVGEEKK (250 aa)) lie on the Extracellular side of the membrane. A glycan (N-linked (GlcNAc...) asparagine) is linked at Asn-112. Residues 122–148 (EHERRRHTPGERGLGGPAPPEPDSGPQ) are disordered. The chain crosses the membrane as a helical span at residues 251–271 (FLLPFWLQVIFISLLLCLSGM). The 181-residue stretch at 251 to 431 (FLLPFWLQVI…DPYNDLVKEE (181 aa)) folds into the CNNM transmembrane domain. Residues 272–313 (FSGLNLGLMALDPMELRIVQNCGTEKEKNYAKRIEPVRRQGN) are Cytoplasmic-facing. The segment at residues 314-334 (YLLCSLLLGNVLVNTTLTILL) is an intramembrane region (helical). Residues 335 to 338 (DDIA) are Cytoplasmic-facing. Residues 339 to 359 (GSGLVAVVVSTIGIVIFGEIV) traverse the membrane as a helical segment. Over 360–368 (PQAICSRHG) the chain is Extracellular. A helical transmembrane segment spans residues 369–389 (LAVGANTIFLTKFFMMMTFPA). Over 390-875 (SYPVSKLLDC…NHSLHSEGAI (486 aa)) the chain is Cytoplasmic. CBS domains follow at residues 450 to 511 (MTPL…CTPL) and 518 to 584 (YNHP…ILDE). A disordered region spans residues 741–763 (AGSPGENKSPPRPCGLNHSDSLS). The residue at position 761 (Ser-761) is a Phosphoserine.

The protein belongs to the ACDP family.

Its subcellular location is the cell membrane. Its function is as follows. Divalent metal cation transporter. Mediates transport of divalent metal cations in an order of Mg(2+) &gt; Co(2+) &gt; Mn(2+) &gt; Sr(2+) &gt; Ba(2+) &gt; Cu(2+) &gt; Fe(2+). This Rattus norvegicus (Rat) protein is Metal transporter CNNM2 (Cnnm2).